The chain runs to 221 residues: Thiamine-phosphate synthase (221 aa).

4-amino-2-methyl-5-(diphosphooxymethyl)pyrimidine is bound by residues Gln39–Lys43 and Asn76. Asp77 and Asp96 together coordinate Mg(2+). Ser114 contacts 4-amino-2-methyl-5-(diphosphooxymethyl)pyrimidine. Thr140 to Thr142 is a binding site for 2-[(2R,5Z)-2-carboxy-4-methylthiazol-5(2H)-ylidene]ethyl phosphate. Lys143 contributes to the 4-amino-2-methyl-5-(diphosphooxymethyl)pyrimidine binding site. Gly171 contributes to the 2-[(2R,5Z)-2-carboxy-4-methylthiazol-5(2H)-ylidene]ethyl phosphate binding site.

It belongs to the thiamine-phosphate synthase family. Mg(2+) serves as cofactor.

It carries out the reaction 2-[(2R,5Z)-2-carboxy-4-methylthiazol-5(2H)-ylidene]ethyl phosphate + 4-amino-2-methyl-5-(diphosphooxymethyl)pyrimidine + 2 H(+) = thiamine phosphate + CO2 + diphosphate. It catalyses the reaction 2-(2-carboxy-4-methylthiazol-5-yl)ethyl phosphate + 4-amino-2-methyl-5-(diphosphooxymethyl)pyrimidine + 2 H(+) = thiamine phosphate + CO2 + diphosphate. The catalysed reaction is 4-methyl-5-(2-phosphooxyethyl)-thiazole + 4-amino-2-methyl-5-(diphosphooxymethyl)pyrimidine + H(+) = thiamine phosphate + diphosphate. Its pathway is cofactor biosynthesis; thiamine diphosphate biosynthesis; thiamine phosphate from 4-amino-2-methyl-5-diphosphomethylpyrimidine and 4-methyl-5-(2-phosphoethyl)-thiazole: step 1/1. Its function is as follows. Condenses 4-methyl-5-(beta-hydroxyethyl)thiazole monophosphate (THZ-P) and 2-methyl-4-amino-5-hydroxymethyl pyrimidine pyrophosphate (HMP-PP) to form thiamine monophosphate (TMP). This Deinococcus geothermalis (strain DSM 11300 / CIP 105573 / AG-3a) protein is Thiamine-phosphate synthase.